The sequence spans 95 residues: Putative monooxygenase YcnE (95 aa).

The ABM domain occupies 2 to 93 (IVLQAYIKVK…APLDVVRTEL (92 aa)). At serine 24 the chain carries Phosphoserine.

The protein belongs to the LsrG family.

Functionally, putative monooxygenase that may contribute to the degradation of aromatic compounds. This is Putative monooxygenase YcnE (ycnE) from Bacillus subtilis (strain 168).